The sequence spans 196 residues: Regulator of G-protein signaling 1 (196 aa).

The tract at residues 1-27 is disordered; the sequence is MPGMFFSANPKDLKGTDQSLLDDKTQK. A compositionally biased stretch (basic and acidic residues) spans 11–25; sequence KDLKGTDQSLLDDKT. Residues 72–187 enclose the RGS domain; sequence SLEKLLANQT…LKSNIYLNLL (116 aa).

As to quaternary structure, interacts with GNAI1 and GNAQ.

The protein localises to the cell membrane. It localises to the cytoplasm. It is found in the cytosol. Its function is as follows. Regulates G protein-coupled receptor signaling cascades, including signaling downstream of the N-formylpeptide chemoattractant receptors and leukotriene receptors. Inhibits B cell chemotaxis toward CXCL12. Inhibits signal transduction by increasing the GTPase activity of G protein alpha subunits, thereby driving them into their inactive GDP-bound form. In Equus caballus (Horse), this protein is Regulator of G-protein signaling 1 (RGS1).